The following is a 117-amino-acid chain: Nascent polypeptide-associated complex protein (117 aa).

The region spanning 9–77 is the NAC-A/B domain; sequence PKQLKQMQRA…ARERSLEAEM (69 aa).

Belongs to the NAC-alpha family. As to quaternary structure, homodimer. Interacts with the ribosome. Binds ribosomal RNA.

Its function is as follows. Contacts the emerging nascent chain on the ribosome. The protein is Nascent polypeptide-associated complex protein of Methanothermobacter thermautotrophicus (strain ATCC 29096 / DSM 1053 / JCM 10044 / NBRC 100330 / Delta H) (Methanobacterium thermoautotrophicum).